Here is a 621-residue protein sequence, read N- to C-terminus: MAKVVGIDLGTTNSVIAVMEGGKPTVIPNKEGLRTTPSVVAYTKKQDKLVGQIAKRQAVMNPENTFYSVKRFIGRKKDELGDELKQSSYNVKTDINSNVKLECPALSKDFAPEEISAQVLRKLVEDASTYLGQQVTQAVITVPAYFNDSQRQATKDAGQIAGLDVLRIINEPTAASLSYGLDKKNNETILVFDLGGGTFDVSILEVGDGVFEVLSTSGDTHLGGDDFDRKIVEWLIHEFSHDEGINLGKDRQALQRLTEAAEKAKMELSSLAQTDINLPFITSTDTGPKHLEKNITRAKFEYLCQDLINRCEIPVNNALKDAQLSSGNIDEIVLVGGSTRIPAIQQLVKKMIGKDPNQSVNPDEVVAIGAAVQAGVLAGEVKDILLLDVTPLSLGVETLGGVMTKIIDRNTTVPTKKSEIFSTAVDNQPNVEIHVLQGEREFTKDNKSLGTFRLDGIMPAPRGVPQIEVIFDIDANGILSVKAKDKGTGKEQSITITGASTLPKEEVEKLVKEAEENSELDKHKREQIDLKNQADALCYQSQNQINELKDKISEDEKQNVQKLIDSLKLSIQEDDYEKIKDIQNQLQQVMMNIGKQVYSSTQQDNSKTEDGSVIDTNSKEA.

Residues 597-621 are disordered; it reads VYSSTQQDNSKTEDGSVIDTNSKEA.

This sequence belongs to the heat shock protein 70 family.

It is found in the plastid. Its subcellular location is the chloroplast. Its function is as follows. Acts as a chaperone. This is Chaperone protein dnaK from Gracilaria tenuistipitata var. liui (Red alga).